Here is a 361-residue protein sequence, read N- to C-terminus: 5-formaminoimidazole-4-carboxamide-1-(beta)-D-ribofuranosyl 5'-monophosphate synthetase (361 aa).

Residues His27 and Ser94 each contribute to the 5-amino-1-(5-phospho-beta-D-ribosyl)imidazole-4-carboxamide site. Positions 116-348 (RQILRWEAER…MGQRIAKEIK (233 aa)) constitute an ATP-grasp domain. ATP is bound by residues 146-208 (PDEI…TNYC) and Glu230. 5-amino-1-(5-phospho-beta-D-ribosyl)imidazole-4-carboxamide is bound at residue Asn258. The Mg(2+) site is built by Gln297 and Glu310.

It belongs to the phosphohexose mutase family. Mg(2+) serves as cofactor. Mn(2+) is required as a cofactor.

It carries out the reaction 5-amino-1-(5-phospho-beta-D-ribosyl)imidazole-4-carboxamide + formate + ATP = 5-formamido-1-(5-phospho-D-ribosyl)imidazole-4-carboxamide + ADP + phosphate. The protein operates within purine metabolism; IMP biosynthesis via de novo pathway; 5-formamido-1-(5-phospho-D-ribosyl)imidazole-4-carboxamide from 5-amino-1-(5-phospho-D-ribosyl)imidazole-4-carboxamide (formate route): step 1/1. Functionally, catalyzes the ATP- and formate-dependent formylation of 5-aminoimidazole-4-carboxamide-1-beta-d-ribofuranosyl 5'-monophosphate (AICAR) to 5-formaminoimidazole-4-carboxamide-1-beta-d-ribofuranosyl 5'-monophosphate (FAICAR) in the absence of folates. This chain is 5-formaminoimidazole-4-carboxamide-1-(beta)-D-ribofuranosyl 5'-monophosphate synthetase, found in Methanococcus aeolicus (strain ATCC BAA-1280 / DSM 17508 / OCM 812 / Nankai-3).